We begin with the raw amino-acid sequence, 120 residues long: U13-lycotoxin-Ls1a (120 aa).

The signal sequence occupies residues 1–16; it reads MKILFVLISILYAVYC. Residues 17 to 54 constitute a propeptide that is removed on maturation; sequence FSSEEDVDSAYLANELEPVEDINSEQYAALEPKEEQGR. 4 cysteine pairs are disulfide-bonded: Cys56–Cys70, Cys63–Cys76, Cys69–Cys87, and Cys78–Cys85. An Agouti domain is found at 56–95; it reads CADMGQDCKDDCDCCLNIATCNCWFGRYFCSCTFGDYQTC.

Belongs to the neurotoxin 05 (agouti) family. In terms of processing, contains 6 disulfide bonds. As to expression, expressed by the venom gland.

It localises to the secreted. The chain is U13-lycotoxin-Ls1a from Lycosa singoriensis (Wolf spider).